We begin with the raw amino-acid sequence, 514 residues long: ATP synthase subunit alpha (514 aa).

An ATP-binding site is contributed by 170 to 177 (GDRQIGKT).

The protein belongs to the ATPase alpha/beta chains family. In terms of assembly, F-type ATPases have 2 components, CF(1) - the catalytic core - and CF(0) - the membrane proton channel. CF(1) has five subunits: alpha(3), beta(3), gamma(1), delta(1), epsilon(1). CF(0) has three main subunits: a(1), b(2) and c(9-12). The alpha and beta chains form an alternating ring which encloses part of the gamma chain. CF(1) is attached to CF(0) by a central stalk formed by the gamma and epsilon chains, while a peripheral stalk is formed by the delta and b chains.

The protein resides in the cell inner membrane. The enzyme catalyses ATP + H2O + 4 H(+)(in) = ADP + phosphate + 5 H(+)(out). Produces ATP from ADP in the presence of a proton gradient across the membrane. The alpha chain is a regulatory subunit. The sequence is that of ATP synthase subunit alpha from Alcanivorax borkumensis (strain ATCC 700651 / DSM 11573 / NCIMB 13689 / SK2).